A 217-amino-acid polypeptide reads, in one-letter code: Large ribosomal subunit protein bL25 (217 aa).

Positions threonine 185–glutamate 217 are disordered. The segment covering valine 189–glutamate 217 has biased composition (acidic residues).

Belongs to the bacterial ribosomal protein bL25 family. CTC subfamily. In terms of assembly, part of the 50S ribosomal subunit; part of the 5S rRNA/L5/L18/L25 subcomplex. Contacts the 5S rRNA. Binds to the 5S rRNA independently of L5 and L18.

In terms of biological role, this is one of the proteins that binds to the 5S RNA in the ribosome where it forms part of the central protuberance. In Desulfosudis oleivorans (strain DSM 6200 / JCM 39069 / Hxd3) (Desulfococcus oleovorans), this protein is Large ribosomal subunit protein bL25.